Consider the following 86-residue polypeptide: Small ribosomal subunit protein bS16 (86 aa).

This sequence belongs to the bacterial ribosomal protein bS16 family.

The polypeptide is Small ribosomal subunit protein bS16 (Borreliella afzelii (strain PKo) (Borrelia afzelii)).